Reading from the N-terminus, the 173-residue chain is Small ribosomal subunit protein uS5 (173 aa).

Positions 18–81 (YVEKLVKLNR…EKAKANMVTF (64 aa)) constitute an S5 DRBM domain.

The protein belongs to the universal ribosomal protein uS5 family. In terms of assembly, part of the 30S ribosomal subunit. Contacts proteins S4 and S8.

With S4 and S12 plays an important role in translational accuracy. Its function is as follows. Located at the back of the 30S subunit body where it stabilizes the conformation of the head with respect to the body. The protein is Small ribosomal subunit protein uS5 of Treponema denticola (strain ATCC 35405 / DSM 14222 / CIP 103919 / JCM 8153 / KCTC 15104).